Consider the following 812-residue polypeptide: MLKLLRPRPWVCNSCLNRVAFPKPYPVGSRSTRWLSTAQSAAPAVSIPPVNPVPADHTTSGTHDDALLGKIFDCSSAWRDFSARSAKFPTENAGLFRNAYLTSPDGFLTFAQSSLSKASAIVNRVLGASTIEEYKTIVRDLDRLSDLLCRVIDLSDFVRVTHPDVRIQRAASEAWYMVYQYMNQLNTMTGLNDQLGKAMENSDVTKTWSEEEMAVAQLLKLDFMKSAVNLPQAARDRFVDLSQRISEIGSDFVNEMAPEQRRVVLPSSKFQGMDPQIARRFTKHGYMQLPTMSGEAAAALRTVHDEETRKAVYLAIRTASSRSVGLLEALLKHRAELADLAGFESYGHMTLRDRMMAKTPESINKFLVELSKNNAPRVLQEVDSLLQEKKTLLASPSATLNPWDREYYIQRIRNAQGKNVKHDNFFASYFSVGRVMQGLSRLFTRLYGIRFVPRETLPGEKWHPDVRRLDVVSDTDGHVAVLYCDLFYREDKSPNPAHFTIRCSRAISEDEISEAAVSTSEGGPAFGSPESAANDGMAASRGASGGPLKQLPTIALVCDFPQRDNPLSGSKSKPASLTFASLETLFHEMGHAIHSVLARTSFQNVAGTRCATDLAELPSTLMEYFASDPSVLSLFARHAETDEPLDYDLLAERVRSRGRFEGCDTDYQIILAMLDQAYHSPLASSESFDTTRAYHDLQREHSPLGPDPSSTRWQGFFGHLFGYGSTYYSYLFDQVLAERAWKKVFSSGQDGAALSREAGEHLKESLLKWGGSREPWRCVSDVLRDERIAGGGEEAMALVGSWGTSNKSTMKH.

Residues 1–35 (MLKLLRPRPWVCNSCLNRVAFPKPYPVGSRSTRWL) constitute a mitochondrion transit peptide. Positions 518-544 (STSEGGPAFGSPESAANDGMAASRGAS) are disordered. A Zn(2+)-binding site is contributed by histidine 587. Glutamate 588 is an active-site residue. 2 residues coordinate Zn(2+): histidine 591 and histidine 594.

The protein belongs to the peptidase M3 family. It depends on Zn(2+) as a cofactor.

It is found in the mitochondrion matrix. The catalysed reaction is Release of an N-terminal octapeptide as second stage of processing of some proteins imported into the mitochondrion.. Its function is as follows. Cleaves proteins, imported into the mitochondrion, to their mature size. While most mitochondrial precursor proteins are processed to the mature form in one step by mitochondrial processing peptidase (MPP), the sequential cleavage by MIP of an octapeptide after initial processing by MPP is a required step for a subgroup of nuclear-encoded precursor proteins destined for the matrix or the inner membrane. The sequence is that of Mitochondrial intermediate peptidase (OCT1) from Pyricularia oryzae (strain 70-15 / ATCC MYA-4617 / FGSC 8958) (Rice blast fungus).